Reading from the N-terminus, the 356-residue chain is MSRYWSPVVGTLSPYVPGEQPKLPDLIKLNTNENPYGPSPKALQAIAAAAGDTLRLYPDPASDDLRGAIAAAVGVQADQVFVGNGSDEVLAHVFMALFRHGRPVRFPDISYSFYPVYCGLYEIPYQVVPLTDDFRIDPADYQPGGQAAGGIIFPNPNAPTGRALARDEVERIVTANPDTVVVVDEAYVDFGAESVAPLVDRHDNLLVVQTLSKSRSLAGLRVGFALGSRALIDGLERVKNSFNSYPIDRLASAGAQAAMQDQAYFDRTRQAVMATRERMSADLRALGFDVLPSAANFVFARHPEHDAAQLAARLRERSILVRHFRQARIDQFLRITVGTDAQCEALIGALKKIFSS.

Lysine 213 carries the post-translational modification N6-(pyridoxal phosphate)lysine.

The protein belongs to the class-II pyridoxal-phosphate-dependent aminotransferase family. Histidinol-phosphate aminotransferase subfamily. Homodimer. The cofactor is pyridoxal 5'-phosphate.

It carries out the reaction L-histidinol phosphate + 2-oxoglutarate = 3-(imidazol-4-yl)-2-oxopropyl phosphate + L-glutamate. The protein operates within amino-acid biosynthesis; L-histidine biosynthesis; L-histidine from 5-phospho-alpha-D-ribose 1-diphosphate: step 7/9. The protein is Histidinol-phosphate aminotransferase 1 (hisC1) of Bordetella parapertussis (strain 12822 / ATCC BAA-587 / NCTC 13253).